A 472-amino-acid polypeptide reads, in one-letter code: MAGGEGGVTLGQPHLSRQDLATLDVTKLTPLSHEVISRQATINIGTIGHVAHGKSTVVKAISGVHTVRFKNELERNITIKLGYANAKIYKLDDPSCPRPECYRSCGSSTPDEFPTDIPGTKGNFKLVRHVSFVDCPGHDILMATMLNGAAVMDAALLLIAGNESCPQPQTSEHLAAIEIMKLKHILILQNKIDLVKESQAKEQYEQILAFVQGTVAEGAPIIPISAQLKYNIEVVCEYIVKKIPVPPRDFTSEPRLIVIRSFDVNKPGCEVDDLKGGVAGGSILKGVLKVGQEIEVRPGIVSKDSEGKLMCKPIFSKIVSLFAEHNDLQYAAPGGLIGVGTKIDPTLCRADRMVGQVLGAVGALPEIFTELEISYFLLRRLLGVRTEGDKKAAKVQKLSKNEVLMVNIGSLSTGGRVSAVKADLGKIVLTNPVCTEVGEKIALSRRVEKHWRLIGWGQIRRGVTIKPTVDDD.

The residue at position 2 (Ala-2) is an N-acetylalanine. Residue Ser-16 is modified to Phosphoserine. The tr-type G domain occupies 39–248; that stretch reads QATINIGTIG…IVKKIPVPPR (210 aa). The tract at residues 48–55 is G1; that stretch reads GHVAHGKS. A GTP-binding site is contributed by 51-56; that stretch reads AHGKST. The interval 76 to 80 is G2; sequence NITIK. Residues 134–137 form a G3 region; the sequence is DCPG. GTP-binding positions include 190 to 193 and 225 to 227; these read NKID and SAQ. Residues 190–193 form a G4 region; sequence NKID. Residues 225–227 are G5; the sequence is SAQ. Residues 457-469 form an interacts with Cdc123 region; it reads GQIRRGVTIKPTV.

Belongs to the TRAFAC class translation factor GTPase superfamily. Classic translation factor GTPase family. EIF2G subfamily. As to quaternary structure, eukaryotic translation initiation factor 2 eIF2 is a heterotrimeric complex composed of an alpha (EIF2S1), a beta (EIF2S2) and a gamma (EIF2S3) chain. eIF2 is member of the 43S pre-initiation complex (43S PIC). Interacts (via C-terminus) with CDC123; the interaction is direct. In terms of tissue distribution, widely expressed. In the brain, high mRNA levels are observed in specific regions, including the habenula, anterodorsal thalamic nucleus, hippocampus, hypothalamus, and cerebellum. Also expressed in the embryonic brain. There is a differential expression between males and females, which is tissue-specific. Females tend to have higher expression levels than males in the brain (cortex, hippocampus and paraventricular nucleus, but not in the habenula), as well as in other tissues. The up-regulation observed in females at the mRNA level may be due to the presence of 2 active copies of the gene.

It localises to the cytoplasm. The protein resides in the cytosol. The enzyme catalyses GTP + H2O = GDP + phosphate + H(+). Its function is as follows. Member of the eIF2 complex that functions in the early steps of protein synthesis by forming a ternary complex with GTP and initiator tRNA. This complex binds to a 40S ribosomal subunit, followed by mRNA binding to form the 43S pre-initiation complex (43S PIC). Junction of the 60S ribosomal subunit to form the 80S initiation complex is preceded by hydrolysis of the GTP bound to eIF2 and release of an eIF2-GDP binary complex. In order for eIF2 to recycle and catalyze another round of initiation, the GDP bound to eIF2 must exchange with GTP by way of a reaction catalyzed by eIF-2B. Along with its paralog on chromosome Y, may contribute to spermatogenesis up to the round spermatid stage. The sequence is that of Eukaryotic translation initiation factor 2 subunit 3, X-linked (Eif2s3x) from Mus musculus (Mouse).